A 247-amino-acid chain; its full sequence is PF03932 family protein CutC (247 aa).

Belongs to the CutC family.

The protein resides in the cytoplasm. This is PF03932 family protein CutC from Klebsiella pneumoniae subsp. pneumoniae (strain ATCC 700721 / MGH 78578).